Here is a 505-residue protein sequence, read N- to C-terminus: AMP phosphorylase (505 aa).

AMP-binding positions include G169, 195–200, and T204; that span reads SRAITG. The Proton donor role is filled by D257. 2 residues coordinate AMP: S265 and K289.

Belongs to the thymidine/pyrimidine-nucleoside phosphorylase family. Type 2 subfamily.

It carries out the reaction AMP + phosphate = alpha-D-ribose 1,5-bisphosphate + adenine. The enzyme catalyses CMP + phosphate = cytosine + alpha-D-ribose 1,5-bisphosphate. The catalysed reaction is UMP + phosphate = alpha-D-ribose 1,5-bisphosphate + uracil. Catalyzes the conversion of AMP and phosphate to adenine and ribose 1,5-bisphosphate (R15P). Exhibits phosphorylase activity toward CMP and UMP in addition to AMP. Functions in an archaeal AMP degradation pathway, together with R15P isomerase and RubisCO. The protein is AMP phosphorylase of Methanocorpusculum labreanum (strain ATCC 43576 / DSM 4855 / Z).